Here is a 308-residue protein sequence, read N- to C-terminus: Limonin dehydrogenase (308 aa).

The protein belongs to the aldehyde dehydrogenase family.

It localises to the periplasm. Its activity is regulated as follows. Completely inhibited by HgCl(2), CoCl(2) and CaCl(2). Its function is as follows. Catalyzes the NAD(+)-dependent conversion of limonin. This is Limonin dehydrogenase from Pseudomonas putida (Arthrobacter siderocapsulatus).